The sequence spans 735 residues: DNA replication licensing factor mcm5-A (735 aa).

An MCM domain is found at isoleucine 332–methionine 538. Arginine 372 provides a ligand contact to ADP. Positions serine 513–aspartate 516 match the Arginine finger motif.

Belongs to the MCM family. As to quaternary structure, component of the mcm2-7 complex (RLF-M). The complex forms a toroidal hexameric ring with the proposed subunit order mcm2-mcm6-mcm4-mcm7-mcm3-mcm5. The heterodimer of mmcm3/mcm5 interacts with mcm4, mmcm6, mcm7 and weakly with mcm2. Component of the CMG helicase complex, composed of the mcm2-7 complex, the GINS complex and cdc45.

It localises to the nucleus. It is found in the chromosome. The catalysed reaction is ATP + H2O = ADP + phosphate + H(+). Its function is as follows. Acts as a component of the MCM2-7 complex (MCM complex) which is the replicative helicase essential for 'once per cell cycle' DNA replication initiation and elongation in eukaryotic cells. Core component of CDC45-MCM-GINS (CMG) helicase, the molecular machine that unwinds template DNA during replication, and around which the replisome is built. The active ATPase sites in the MCM2-7 ring are formed through the interaction surfaces of two neighboring subunits such that a critical structure of a conserved arginine finger motif is provided in trans relative to the ATP-binding site of the Walker A box of the adjacent subunit. The six ATPase active sites, however, are likely to contribute differentially to the complex helicase activity. In Xenopus laevis (African clawed frog), this protein is DNA replication licensing factor mcm5-A (mcm5-a).